The chain runs to 198 residues: MDAILNYRPEGSEDYYTLLGCDELSSVEQILAEFKVRALECHPDKHPENSKAVETFQKLQKAKEILSNAESRARYDHWRRSQMSMSFEQWEALADSVKTSMHWAVRSKKDLMLEGSEQTYTNTAQNKERSEQRETKQGDPDSTPEKMMQKESESPEKGISPQNPDSPGLSDWNCGHLHFRWSGDTPSELLRKFRNYEI.

Residue Met-1 is modified to N-acetylmethionine. The region spanning Asp-14 to Arg-79 is the J domain. Residues Thr-121–Gly-183 form a disordered region. Over residues Asn-126–Glu-156 the composition is skewed to basic and acidic residues. Phosphoserine occurs at positions 160, 166, and 182.

As to quaternary structure, interacts with HSPA8. Interacts with TPH1. Interacts with TPH2.

It is found in the cytoplasm. Probable co-chaperone that participates in the proper folding of biopterin-dependent aromatic amino acid hydroxylases, which include phenylalanine-4-hydroxylase (PAH), tyrosine 3-monooxygenase (TH) and peripheral and neuronal tryptophan hydroxylases (TPH1 and TPH2). This is DnaJ homolog subfamily C member 12 (Dnajc12) from Rattus norvegicus (Rat).